We begin with the raw amino-acid sequence, 320 residues long: uncharacterized protein (320 aa).

This sequence to S.pombe SpAC23H3.12c.

This is an uncharacterized protein from Saccharomyces cerevisiae (strain ATCC 204508 / S288c) (Baker's yeast).